Reading from the N-terminus, the 232-residue chain is Ureidoacrylate amidohydrolase RutB (232 aa).

The active-site Proton acceptor is the Asp-26. Lys-135 is a catalytic residue. The Nucleophile role is filled by Cys-168.

This sequence belongs to the isochorismatase family. RutB subfamily.

The enzyme catalyses (Z)-3-ureidoacrylate + H2O + H(+) = (Z)-3-aminoacrylate + NH4(+) + CO2. It catalyses the reaction (Z)-3-ureidoacrylate + H2O = (Z)-3-aminoacrylate + carbamate + H(+). It carries out the reaction (Z)-2-methylureidoacrylate + H2O + H(+) = (Z)-2-methylaminoacrylate + NH4(+) + CO2. Its function is as follows. Hydrolyzes ureidoacrylate to form aminoacrylate and carbamate. The carbamate hydrolyzes spontaneously, thereby releasing one of the nitrogen atoms of the pyrimidine ring as ammonia and one of its carbon atoms as CO2. This chain is Ureidoacrylate amidohydrolase RutB, found in Cronobacter sakazakii (strain ATCC BAA-894) (Enterobacter sakazakii).